Reading from the N-terminus, the 494-residue chain is MIPVVALVGRPNVGKSTLFNRLTHTRDALVADFPGLTRDRKYGRAEVEGNEFIIVDTGGIDGTEDGVETRMAGQSLLAIEEADIVLFMVDARAGLMPADLGIAQHLRNRQKATFLVANKTDGMDPDMAAADFYSLGLGDVHPIAASHGRGVAQLIEHVLVPFVGEKPEEVELTEEEANAAYWAEQEGETLEGAEEEPEDDFNPQDLPIKLAIVGRPNVGKSTLTNRILGEDRVVVYDMPGTTRDSIYIPMVRDEREYVLIDTAGVRKRGKVTETVEKFSVIKTLQAIEDANVVLLVVDAREGISDQDLSLLGFILNSGRSLVIVVNKWDGMSEEDRDHVKEMLDLRLGFVDFARIHFISALHGSGVGNLFVSVLEAYECATRRVNTSMLTKIMQMAADDHQPPLVRGRRVKLKYAHAGGYNPPIVVIHGNQVTDLSDSYKRYLMNYFRRSLKVMGTPIRIQFKEGENPFAGKRNLLTPNQMRKRKRLMSHLKKG.

2 consecutive EngA-type G domains span residues 3 to 166 (PVVA…VGEK) and 208 to 381 (IKLA…ECAT). Residues 9-16 (GRPNVGKS), 56-60 (DTGGI), 118-121 (NKTD), 214-221 (GRPNVGKS), 261-265 (DTAGV), and 326-329 (NKWD) each bind GTP. A KH-like domain is found at 382-466 (RRVNTSMLTK…PIRIQFKEGE (85 aa)).

The protein belongs to the TRAFAC class TrmE-Era-EngA-EngB-Septin-like GTPase superfamily. EngA (Der) GTPase family. As to quaternary structure, associates with the 50S ribosomal subunit.

GTPase that plays an essential role in the late steps of ribosome biogenesis. The chain is GTPase Der from Serratia proteamaculans (strain 568).